Reading from the N-terminus, the 634-residue chain is 1,4-alpha-glucan branching enzyme GlgB (634 aa).

The active-site Nucleophile is aspartate 305. The active-site Proton donor is the glutamate 357.

It belongs to the glycosyl hydrolase 13 family. GlgB subfamily. Monomer.

It carries out the reaction Transfers a segment of a (1-&gt;4)-alpha-D-glucan chain to a primary hydroxy group in a similar glucan chain.. Its pathway is glycan biosynthesis; glycogen biosynthesis. In terms of biological role, catalyzes the formation of the alpha-1,6-glucosidic linkages in glycogen by scission of a 1,4-alpha-linked oligosaccharide from growing alpha-1,4-glucan chains and the subsequent attachment of the oligosaccharide to the alpha-1,6 position. This is 1,4-alpha-glucan branching enzyme GlgB from Lactiplantibacillus plantarum (strain ATCC BAA-793 / NCIMB 8826 / WCFS1) (Lactobacillus plantarum).